Here is a 1838-residue protein sequence, read N- to C-terminus: Collagen alpha-1(V) chain (1838 aa).

The first 36 residues, 1–36 (MDVHTRWKAARPGALLLSSPLLLFLLLLWAPPSSRA), serve as a signal peptide directing secretion. In terms of domain architecture, Laminin G-like spans 72 to 244 (DVAYRVSKDA…DYCEHYSPDC (173 aa)). The interval 231–443 (RAAYDYCEHY…MPANQDTIFE (213 aa)) is nonhelical region. 5 positions are modified to sulfotyrosine: Y234, Y236, Y240, Y262, and Y263. Disordered regions lie at residues 242–545 (PDCD…QESQ) and 559–1574 (GPAG…EVIQ). Positions 258–268 (NPDEYYPEGEG) are enriched in acidic residues. 4 stretches are compositionally biased toward low complexity: residues 335–345 (DYDYVPPDDYY), 374–387 (VPTSTTVTSNTSNP), 413–428 (YDPYFDPDSDSSVSPS), and 460–469 (IIEPGMLIEG). The interval 444-558 (GIGGPRGEKG…ILQQARLALR (115 aa)) is interrupted collagenous region. Positions 470–485 (PPGPEGPAGLPGPPGT) are enriched in pro residues. Composition is skewed to low complexity over residues 506 to 523 (LPGADGLPGPPGTMLMLP) and 559 to 570 (GPAGPMGLTGRP). Residues 559–1570 (GPAGPMGLTG…GLPGPPGPPG (1012 aa)) are triple-helical region. A 4-hydroxyproline mark is found at P570, P576, and P621. K627 bears the 5-hydroxylysine mark. 4-hydroxyproline is present on P639. At K642 the chain carries 5-hydroxylysine. Residues P648, P654, P657, P675, and P678 each carry the 4-hydroxyproline modification. Over residues 671–686 (PRGLPGEPGPRGLLGP) the composition is skewed to low complexity. A 3-hydroxyproline mark is found at P680 and P686. The segment covering 687-696 (KGPPGPPGPP) has biased composition (pro residues). 4-hydroxyproline is present on residues P690, P696, and P705. At K708 the chain carries 5-hydroxylysine. 4 positions are modified to 4-hydroxyproline: P717, P720, P726, and P732. Residues 722–741 (QQGNPGAQGLPGPQGAIGPP) are compositionally biased toward low complexity. K744 is modified (5-hydroxylysine). The segment covering 747–756 (LGKPGLPGMP) has biased composition (low complexity). P750, P756, P762, P765, and P771 each carry 4-hydroxyproline. K774 carries the post-translational modification 5-hydroxylysine. A 4-hydroxyproline mark is found at P780 and P789. Residues K795, K804, K807, and K810 each carry the 5-hydroxylysine modification. P816 bears the 4-hydroxyproline mark. Residue K819 is modified to 5-hydroxylysine. P834 carries the post-translational modification 4-hydroxyproline. Residues 837-846 (RGEDGPEGPK) are compositionally biased toward basic and acidic residues. 5-hydroxylysine occurs at positions 846 and 864. A 4-hydroxyproline mark is found at P870, P873, and P876. The residue at position 882 (K882) is a 5-hydroxylysine. A 4-hydroxyproline mark is found at P888 and P891. Residue K897 is modified to 5-hydroxylysine. 4-hydroxyproline occurs at positions 903 and 906. Low complexity predominate over residues 908–917 (PRGQRGPTGP). 4-hydroxyproline is present on residues P930 and P945. 2 stretches are compositionally biased toward low complexity: residues 971 to 990 (KDGLPGHPGQRGETGFQGKT) and 999 to 1011 (VGPQGPTGETGPM). 4 positions are modified to 4-hydroxyproline: P1017, P1020, P1023, and P1029. The segment covering 1088 to 1104 (SPGERGPAGAAGPIGIP) has biased composition (low complexity). Positions 1106-1115 (RPGPQGPPGP) are enriched in pro residues. 2 positions are modified to 4-hydroxyproline: P1221 and P1224. The span at 1259–1268 (PSGAPGADGP) shows a compositional bias: low complexity. Residues 1294 to 1303 (GLPGEGGPLG) are compositionally biased toward gly residues. Composition is skewed to pro residues over residues 1380–1398 (TGEPGPSGPPGKRGPPGPA) and 1454–1469 (SPGPDGPPGPMGPPGL). Residues P1467 and P1470 each carry the 4-hydroxyproline modification. The span at 1485–1494 (PGLIGLIGPP) shows a compositional bias: low complexity. Pro residues predominate over residues 1526 to 1541 (PLGPPGPPGLPGPPGP). Residues 1542-1554 (KGAKGSSGPTGPK) are compositionally biased toward low complexity. The segment at 1571–1605 (EVIQPLPIQASRTRRNIDASQLLDDGAGESYVDYA) is nonhelical region. 2 positions are modified to sulfotyrosine: Y1601 and Y1604. Positions 1609–1837 (EEIFGSLNSL…GFEVGPACFL (229 aa)) constitute a Fibrillar collagen NC1 domain.

The protein belongs to the fibrillar collagen family. As to quaternary structure, trimers of two alpha 1(V) and one alpha 2(V) chains in most tissues and trimers of one alpha 1(V), one alpha 2(V), and one alpha 3(V) chains in placenta. Interacts with CSPG4. Hydroxylation on proline residues within the sequence motif, GXPG, is most likely to be 4-hydroxy as this fits the requirement for 4-hydroxylation in vertebrates. Post-translationally, sulfated on 40% of tyrosines. As to expression, widely expressed. Isoform 2 is more highly expressed in liver, kidney and lung.

The protein localises to the secreted. It is found in the extracellular space. The protein resides in the extracellular matrix. Functionally, type V collagen is a member of group I collagen (fibrillar forming collagen). It is a minor connective tissue component of nearly ubiquitous distribution. Type V collagen binds to DNA, heparan sulfate, thrombospondin, heparin, and insulin. Transcriptionally activated by CEBPZ, which recognizes a CCAAT-like motif, CAAAT in the COL5A1 promoter. The polypeptide is Collagen alpha-1(V) chain (Col5a1) (Mus musculus (Mouse)).